A 101-amino-acid chain; its full sequence is Therostasin (101 aa).

The first 19 residues, 1–19 (MRGLAVLLLVACFCSVAFG), serve as a signal peptide directing secretion. Antistasin-like domains follow at residues 21–46 (CENT…TCLC) and 49–75 (CNDA…FCTC).

In terms of tissue distribution, salivary glands.

It is found in the secreted. Functionally, potent inhibitor of factor Xa. It also inhibits trypsin in a weaker manner. In Theromyzon tessulatum (Duck leech), this protein is Therostasin.